Here is a 257-residue protein sequence, read N- to C-terminus: Diacetyl reductase [(S)-acetoin forming] (257 aa).

6-30 (IITGSAGGLGKGIAERLANDGFNIV) provides a ligand contact to NAD(+). S139 serves as a coordination point for substrate. The active-site Proton acceptor is the Y152. K156 is a catalytic residue.

The protein belongs to the short-chain dehydrogenases/reductases (SDR) family.

The enzyme catalyses (S)-acetoin + NAD(+) = diacetyl + NADH + H(+). Its function is as follows. Catalyzes the irreversible reduction of 2,3-butanediol to (S)-acetoin in the presence of NADH. This is Diacetyl reductase [(S)-acetoin forming] (butA) from Staphylococcus epidermidis (strain ATCC 35984 / DSM 28319 / BCRC 17069 / CCUG 31568 / BM 3577 / RP62A).